The following is a 278-amino-acid chain: Small ribosomal subunit protein uS2 (278 aa).

Residues 233 to 258 (IDMEAAGEAPANKGKKKSAKARLDKS) form a disordered region.

This sequence belongs to the universal ribosomal protein uS2 family.

This Bacteroides fragilis (strain ATCC 25285 / DSM 2151 / CCUG 4856 / JCM 11019 / LMG 10263 / NCTC 9343 / Onslow / VPI 2553 / EN-2) protein is Small ribosomal subunit protein uS2.